A 682-amino-acid polypeptide reads, in one-letter code: Inactive protein-arginine deiminase type-6 (682 aa).

Phosphoserine is present on residues Ser2 and Ser434.

Belongs to the protein arginine deiminase family. Homodimers. Associates with alpha-tubulin. Post-translationally, phosphorylation at Ser-2, possibly by RSK-type kinases, and Ser-434 creates binding sites for 14-3-3 proteins. In terms of tissue distribution, expressed at very high levels in oocytes. Weakly expressed in testis. Expressed in primordial, primary, secondary and Graafian follicles, and in immature oocytes, mature eggs and blastocyst (at protein level).

The protein resides in the cytoplasm. It is found in the nucleus. It localises to the cytoplasmic vesicle. The protein localises to the secretory vesicle. Its subcellular location is the cortical granule. Functionally, structural constituent of cytoplasmic lattices, which plays a key role in early embryonic development. Cytoplasmic lattices consist in fibrous structures found in the cytoplasm of oocytes and preimplantation embryos. They are required to store maternal proteins critical for embryonic development, such as ribosomal proteins and proteins that control epigenetic reprogramming of the preimplantation embryo, and prevent their degradation or activation. In contrast to other members of the family, does not show protein-arginine deiminase activity due to its inability to bind Ca(2+). This Mus musculus (Mouse) protein is Inactive protein-arginine deiminase type-6.